A 297-amino-acid chain; its full sequence is E3 ubiquitin-protein ligase RNF212B (297 aa).

The segment at 6–40 (CNQCFRKDGAHFFVTSCGHIFCKKCMTLEKCAVCG) adopts an RING-type zinc-finger fold. The stretch at 87–136 (LLIAFYKDRITKLEAAVKEAQEMAASQNKELSALRKENGELKKILDILKG) forms a coiled coil. Disordered regions lie at residues 152–179 (VGIT…RSSS) and 198–269 (RGLH…ESLP). Residues 163 to 179 (PRPSSHHSSQVVSRSSS) are compositionally biased toward low complexity. Over residues 206–234 (PGDSYTETPSPASTHSLSYRPSSASSGQG) the composition is skewed to polar residues.

In terms of assembly, homodimer. Autoubiquitinated.

The protein resides in the chromosome. The enzyme catalyses S-ubiquitinyl-[E2 ubiquitin-conjugating enzyme]-L-cysteine + [acceptor protein]-L-lysine = [E2 ubiquitin-conjugating enzyme]-L-cysteine + N(6)-ubiquitinyl-[acceptor protein]-L-lysine.. It participates in protein modification; protein ubiquitination. Ubiquitin E3 ligase that acts as a crucial factor for crossing-over (CO) formation during meiosis. Essential for normal prophase I progression and for ensuring appropriate CO designation in meiosis. Recruits key components of the cross-over machinery either directly ou indirectly, leading to the activation of the MutL-gamma complex. The function of RNF212B in CO designation is dependent on its catalytic activity. The protein is E3 ubiquitin-protein ligase RNF212B (Rnf212b) of Mus musculus (Mouse).